Reading from the N-terminus, the 324-residue chain is N-acetyl-gamma-glutamyl-phosphate reductase (324 aa).

Cysteine 131 is a catalytic residue.

It belongs to the NAGSA dehydrogenase family. Type 1 subfamily.

It is found in the cytoplasm. It catalyses the reaction N-acetyl-L-glutamate 5-semialdehyde + phosphate + NADP(+) = N-acetyl-L-glutamyl 5-phosphate + NADPH + H(+). It functions in the pathway amino-acid biosynthesis; L-arginine biosynthesis; N(2)-acetyl-L-ornithine from L-glutamate: step 3/4. In terms of biological role, catalyzes the NADPH-dependent reduction of N-acetyl-5-glutamyl phosphate to yield N-acetyl-L-glutamate 5-semialdehyde. The sequence is that of N-acetyl-gamma-glutamyl-phosphate reductase from Bradyrhizobium sp. (strain BTAi1 / ATCC BAA-1182).